The primary structure comprises 824 residues: Leucine--tRNA ligase (824 aa).

Residues 42-52 carry the 'HIGH' region motif; that stretch reads PYPSGKIHMGH. The 'KMSKS' region signature appears at 581–585; that stretch reads KMSKS. An ATP-binding site is contributed by lysine 584.

This sequence belongs to the class-I aminoacyl-tRNA synthetase family.

Its subcellular location is the cytoplasm. It catalyses the reaction tRNA(Leu) + L-leucine + ATP = L-leucyl-tRNA(Leu) + AMP + diphosphate. This Citrifermentans bemidjiense (strain ATCC BAA-1014 / DSM 16622 / JCM 12645 / Bem) (Geobacter bemidjiensis) protein is Leucine--tRNA ligase.